The primary structure comprises 428 residues: C4-dicarboxylate transport protein (428 aa).

The next 9 helical transmembrane spans lie at serine 8 to proline 28, leucine 44 to methionine 64, valine 76 to valine 96, isoleucine 142 to phenylalanine 162, valine 184 to methionine 204, leucine 222 to alanine 242, valine 289 to leucine 309, isoleucine 326 to valine 346, and isoleucine 352 to isoleucine 372.

This sequence belongs to the dicarboxylate/amino acid:cation symporter (DAACS) (TC 2.A.23) family.

The protein localises to the cell inner membrane. In terms of biological role, responsible for the transport of dicarboxylates such as succinate, fumarate, and malate from the periplasm across the membrane. The sequence is that of C4-dicarboxylate transport protein from Klebsiella pneumoniae subsp. pneumoniae (strain ATCC 700721 / MGH 78578).